A 146-amino-acid polypeptide reads, in one-letter code: Fluoride-specific ion channel FluC (146 aa).

The next 4 membrane-spanning stretches (helical) occupy residues 8-28, 47-67, 91-111, and 121-141; these read FAIALGGSIGAVLRYLITLTV, LANLLGCCALGGLFQFSQALV, IGVLGSLTTFSTLIGETAVFA, and MLLGINVIAGWCLFWAAAAVV. Na(+)-binding residues include glycine 95 and threonine 98.

This sequence belongs to the fluoride channel Fluc/FEX (TC 1.A.43) family.

The protein resides in the cell inner membrane. It catalyses the reaction fluoride(in) = fluoride(out). Its activity is regulated as follows. Na(+) is not transported, but it plays an essential structural role and its presence is essential for fluoride channel function. Fluoride-specific ion channel. Important for reducing fluoride concentration in the cell, thus reducing its toxicity. The polypeptide is Fluoride-specific ion channel FluC (Rhodopirellula baltica (strain DSM 10527 / NCIMB 13988 / SH1)).